We begin with the raw amino-acid sequence, 748 residues long: Cysteine--tRNA ligase, cytoplasmic (748 aa).

A disordered region spans residues 1-25 (MAAAPAEQGKGKRVQPPWSPPEGTK). Position 55 (Cys55) interacts with Zn(2+). Gly56 lines the L-cysteine pocket. Residues 57–67 (PTVYDASHMGH) carry the 'HIGH' region motif. Residue Thr96 participates in L-cysteine binding. Residues 101–104 (KIIK) carry the 'KIIK' region motif. Cys348, His373, and Glu377 together coordinate Zn(2+). His373 serves as a coordination point for L-cysteine. Residues 406–410 (KMSKS) carry the 'KMSKS' region motif. Lys409 is an ATP binding site. Basic and acidic residues-rich tracts occupy residues 656-679 (KIEE…EAAK) and 686-717 (PPHE…KELS). Residues 656 to 719 (KIEEEKKRKK…DTEGKELSKG (64 aa)) are disordered.

This sequence belongs to the class-I aminoacyl-tRNA synthetase family. Homodimer. It depends on Zn(2+) as a cofactor.

The protein resides in the cytoplasm. It carries out the reaction tRNA(Cys) + L-cysteine + ATP = L-cysteinyl-tRNA(Cys) + AMP + diphosphate. In terms of biological role, catalyzes the ATP-dependent ligation of cysteine to tRNA(Cys). The sequence is that of Cysteine--tRNA ligase, cytoplasmic (CARS1) from Gallus gallus (Chicken).